The following is a 595-amino-acid chain: Coronatine-insensitive protein homolog 1a (595 aa).

The 43-residue stretch at 20–62 (WVPDEALHLVMGHVEDPRDREAASRVCRRWHRIDALTRKHVTV) folds into the F-box domain. Positions 90, 351, 389, 412, and 499 each coordinate jasmonate.

In terms of assembly, interacts with TIFY6A/JAZ3, TIFY6B/JAZ4 and TIFY11D/JAZ12 in a coronatine-dependent manner. Interacts with TIFY9/JAZ5, TIFY10A/JAZ6, TIFY10B/JAZ7, TIFY11A/JAZ9 and TIFY11C/JAZ11 in a coronatine-dependent manner.

Involved in jasmonate (JA) signaling. Required for jasmonate signaling in plant defense responses. Can complement Arabidopsis coi1-1 mutant and restore jasmonate signaling. Required for JA-regulated defense responses to infestation by the leaffolder Cnaphalocrocis medinalis. May act on an initial response of jasmonate-regulated gene expression toward drought tolerance as part of a BHLH148-TIFY11D/JAZ12-COI1A complex. Component of SCF(COI1) E3 ubiquitin ligase complexes, which may mediate the ubiquitination and subsequent proteasomal degradation of target proteins, including TIFY/JAZ family. The sequence is that of Coronatine-insensitive protein homolog 1a from Oryza sativa subsp. indica (Rice).